Reading from the N-terminus, the 381-residue chain is cAMP-dependent protein kinase type I-alpha regulatory subunit (381 aa).

Position 1 is an N-acetylmethionine (Met1). The segment at 1–135 is dimerization and phosphorylation; sequence MESGSTAASE…AALAKAIEKN (135 aa). Ser3 carries the post-translational modification Phosphoserine. The tract at residues 64–96 is disordered; it reads QIQNLQKAGTRTDSREDEISPPPPNPVVKGRRR. At Thr75 the chain carries Phosphothreonine. A phosphoserine mark is found at Ser77 and Ser83. The Pseudophosphorylation motif signature appears at 96 to 100; that stretch reads RRGAI. The residue at position 101 (Ser101) is a Phosphoserine. Residues 137-254, Glu202, Arg211, 255-381, Glu326, and Arg335 contribute to the 3',5'-cyclic AMP site; these read LFSH…SKVS and ILES…SLSV. Residue Ser258 is modified to Phosphoserine.

Belongs to the cAMP-dependent kinase regulatory chain family. The inactive holoenzyme is composed of two regulatory chains and two catalytic chains. Activation by cAMP releases the two active catalytic monomers and the regulatory dimer. Interacts with PRKACA and PRKACB. PRKAR1A also interacts with RFC2; the complex may be involved in cell survival. Interacts with AKAP4. Interacts with RARA; the interaction occurs in the presence of cAMP or FSH and regulates RARA transcriptional activity. Interacts with the phosphorylated form of PJA2. Interacts with CBFA2T3. Interacts with PRKX; regulates this cAMP-dependent protein kinase. Interacts with smAKAP; this interaction may target PRKAR1A to the plasma membrane. Interacts with AICDA. In terms of processing, the pseudophosphorylation site binds to the substrate-binding region of the catalytic chain, resulting in the inhibition of its activity.

Its subcellular location is the cell membrane. Its function is as follows. Regulatory subunit of the cAMP-dependent protein kinases involved in cAMP signaling in cells. This is cAMP-dependent protein kinase type I-alpha regulatory subunit (PRKAR1A) from Pongo abelii (Sumatran orangutan).